Consider the following 720-residue polypeptide: Exocyst complex component 7 (720 aa).

2 coiled-coil regions span residues 5-34 and 63-83; these read EDAS…SLEK and VHKQ…TLSN. A Phosphoserine modification is found at S133. The segment at 249-268 is disordered; that stretch reads SPAVQTKRKETPTKKAPKRP.

The protein belongs to the EXO70 family.

Its subcellular location is the cytoplasm. The protein resides in the cytosol. The protein localises to the cell membrane. It localises to the midbody. It is found in the midbody ring. Functionally, component of the exocyst complex involved in the docking of exocytic vesicles with fusion sites on the plasma membrane. It is required for neuron survival and plays an essential role in telencephalon development. The polypeptide is Exocyst complex component 7 (exoc7) (Danio rerio (Zebrafish)).